Reading from the N-terminus, the 249-residue chain is tRNA pseudouridine synthase A (249 aa).

D52 functions as the Nucleophile in the catalytic mechanism. Position 110 (Y110) interacts with substrate.

The protein belongs to the tRNA pseudouridine synthase TruA family. Homodimer.

It carries out the reaction uridine(38/39/40) in tRNA = pseudouridine(38/39/40) in tRNA. Functionally, formation of pseudouridine at positions 38, 39 and 40 in the anticodon stem and loop of transfer RNAs. The chain is tRNA pseudouridine synthase A from Azobacteroides pseudotrichonymphae genomovar. CFP2.